We begin with the raw amino-acid sequence, 321 residues long: Probable arabinan endo-1,5-alpha-L-arabinosidase C (321 aa).

The first 20 residues, 1–20 (MYLYTLILLFLASVNVNAYA), serve as a signal peptide directing secretion. The Proton acceptor role is filled by Asp33. N-linked (GlcNAc...) asparagine glycans are attached at residues Asn75 and Asn192. The active-site Proton donor is the Glu200. N-linked (GlcNAc...) asparagine glycosylation occurs at Asn224.

It belongs to the glycosyl hydrolase 43 family.

It localises to the secreted. It catalyses the reaction Endohydrolysis of (1-&gt;5)-alpha-arabinofuranosidic linkages in (1-&gt;5)-arabinans.. It functions in the pathway glycan metabolism; L-arabinan degradation. Functionally, endo-1,5-alpha-L-arabinanase involved in degradation of pectin. Its preferred substrate is linear 1,5-alpha-L-arabinan. The protein is Probable arabinan endo-1,5-alpha-L-arabinosidase C (abnC) of Neosartorya fischeri (strain ATCC 1020 / DSM 3700 / CBS 544.65 / FGSC A1164 / JCM 1740 / NRRL 181 / WB 181) (Aspergillus fischerianus).